The sequence spans 315 residues: DNA-directed RNA polymerase subunit alpha (315 aa).

The alpha N-terminal domain (alpha-NTD) stretch occupies residues 1–228 (MIEMEKPKVE…EHLNLFITLK (228 aa)). Positions 245–315 (KEKVLEMTIE…LGLGLRPSDE (71 aa)) are alpha C-terminal domain (alpha-CTD).

The protein belongs to the RNA polymerase alpha chain family. In terms of assembly, homodimer. The RNAP catalytic core consists of 2 alpha, 1 beta, 1 beta' and 1 omega subunit. When a sigma factor is associated with the core the holoenzyme is formed, which can initiate transcription.

The catalysed reaction is RNA(n) + a ribonucleoside 5'-triphosphate = RNA(n+1) + diphosphate. Its function is as follows. DNA-dependent RNA polymerase catalyzes the transcription of DNA into RNA using the four ribonucleoside triphosphates as substrates. This chain is DNA-directed RNA polymerase subunit alpha, found in Alkaliphilus metalliredigens (strain QYMF).